Consider the following 112-residue polypeptide: Probable insulin-like peptide beta-type 5 (112 aa).

Positions 1-19 (MNSVFTIIFVLCALQVAAS) are cleaved as a signal peptide. A propeptide spans 20-58 (FRQSFGPSMSEESASMQLLRELQHNMMESAHRPMPRARR) (removed; by convertase egl-3). 4 disulfides stabilise this stretch: Cys-68–Cys-97, Cys-80–Cys-110, Cys-84–Cys-111, and Cys-96–Cys-101.

The protein belongs to the insulin family. May be processed by serine endoprotease bli-4. As to expression, expressed by ASI and ASJ sensory neurons.

The protein resides in the secreted. Functionally, probable insulin-like peptide which negatively regulates synapse development at the neuromuscular junctions. Probably acts as a daf-2/InsR agonist ligand to prevent dauer formation under optimal environmental conditions. Acts on AWC sensory neurons to regulate high salt chemotaxis responses. In Caenorhabditis elegans, this protein is Probable insulin-like peptide beta-type 5 (ins-6).